Consider the following 158-residue polypeptide: Endoribonuclease YbeY (158 aa).

3 residues coordinate Zn(2+): His-124, His-128, and His-134.

It belongs to the endoribonuclease YbeY family. Zn(2+) is required as a cofactor.

Its subcellular location is the cytoplasm. Single strand-specific metallo-endoribonuclease involved in late-stage 70S ribosome quality control and in maturation of the 3' terminus of the 16S rRNA. The polypeptide is Endoribonuclease YbeY (Caldicellulosiruptor saccharolyticus (strain ATCC 43494 / DSM 8903 / Tp8T 6331)).